A 378-amino-acid chain; its full sequence is Lipid-A-disaccharide synthase (378 aa).

It belongs to the LpxB family.

It catalyses the reaction a lipid X + a UDP-2-N,3-O-bis[(3R)-3-hydroxyacyl]-alpha-D-glucosamine = a lipid A disaccharide + UDP + H(+). The protein operates within bacterial outer membrane biogenesis; LPS lipid A biosynthesis. Condensation of UDP-2,3-diacylglucosamine and 2,3-diacylglucosamine-1-phosphate to form lipid A disaccharide, a precursor of lipid A, a phosphorylated glycolipid that anchors the lipopolysaccharide to the outer membrane of the cell. The chain is Lipid-A-disaccharide synthase from Pseudomonas paraeruginosa (strain DSM 24068 / PA7) (Pseudomonas aeruginosa (strain PA7)).